The sequence spans 320 residues: Nucleotide-binding protein Acid_7395 (320 aa).

The disordered stretch occupies residues 1–34 (MPLRKKGAATTKAAATRKDSAKAPASSKRKDAPQ). An ATP-binding site is contributed by 44–51 (GLSGSGKG). Residue 94–97 (DIRE) coordinates GTP.

It belongs to the RapZ-like family.

Functionally, displays ATPase and GTPase activities. The sequence is that of Nucleotide-binding protein Acid_7395 from Solibacter usitatus (strain Ellin6076).